The chain runs to 97 residues: MPQAINLKDLPQAKLKDLLEFPCAFTFKVVGIHREDLVEDVVAITQVHAKGDCNPRQQRSSKGTYNSVSIDIIAEHIDQIETLYLELAKITGVRMVL.

The protein belongs to the UPF0250 family.

The sequence is that of UPF0250 protein HD_2015 from Haemophilus ducreyi (strain 35000HP / ATCC 700724).